Here is a 504-residue protein sequence, read N- to C-terminus: Anaerobic nitric oxide reductase transcription regulator NorR (504 aa).

Aspartate 57 carries the post-translational modification 4-aspartylphosphate. Residues 187-416 (MIGLSPGMTQ…LEHAIHRAVV (230 aa)) form the Sigma-54 factor interaction domain. ATP contacts are provided by residues 215 to 222 (GETGTGKE) and 278 to 287 (ADNGTLFLDE). Positions 479–498 (WAACARMLETDVANLHRLAK) form a DNA-binding region, H-T-H motif.

Its pathway is nitrogen metabolism; nitric oxide reduction. Functionally, required for the expression of anaerobic nitric oxide (NO) reductase, acts as a transcriptional activator for at least the norVW operon. Activation also requires sigma-54. The polypeptide is Anaerobic nitric oxide reductase transcription regulator NorR (Escherichia coli O6:K15:H31 (strain 536 / UPEC)).